Here is a 245-residue protein sequence, read N- to C-terminus: rRNA adenine N-6-methyltransferase (245 aa).

Residues Asn-10, Leu-12, Gly-37, Glu-58, Asp-83, and Ser-100 each contribute to the S-adenosyl-L-methionine site.

The protein belongs to the class I-like SAM-binding methyltransferase superfamily. rRNA adenine N(6)-methyltransferase family.

It carries out the reaction adenosine(2085) in 23S rRNA + 2 S-adenosyl-L-methionine = N(6)-dimethyladenosine(2085) in 23S rRNA + 2 S-adenosyl-L-homocysteine + 2 H(+). Its function is as follows. This protein produces a dimethylation of the adenine residue at position 2085 in 23S rRNA, resulting in reduced affinity between ribosomes and macrolide-lincosamide-streptogramin B antibiotics. The polypeptide is rRNA adenine N-6-methyltransferase (ermBP) (Clostridium perfringens).